We begin with the raw amino-acid sequence, 340 residues long: 4-hydroxy-3-methylbut-2-enyl diphosphate reductase (340 aa).

Position 18 (cysteine 18) interacts with [4Fe-4S] cluster. Histidine 47 and histidine 83 together coordinate (2E)-4-hydroxy-3-methylbut-2-enyl diphosphate. Residues histidine 47 and histidine 83 each coordinate dimethylallyl diphosphate. Isopentenyl diphosphate is bound by residues histidine 47 and histidine 83. Cysteine 105 serves as a coordination point for [4Fe-4S] cluster. Residue histidine 133 coordinates (2E)-4-hydroxy-3-methylbut-2-enyl diphosphate. Position 133 (histidine 133) interacts with dimethylallyl diphosphate. Residue histidine 133 participates in isopentenyl diphosphate binding. Residue glutamate 135 is the Proton donor of the active site. A (2E)-4-hydroxy-3-methylbut-2-enyl diphosphate-binding site is contributed by threonine 174. Cysteine 204 is a [4Fe-4S] cluster binding site. Positions 232, 233, 234, and 277 each coordinate (2E)-4-hydroxy-3-methylbut-2-enyl diphosphate. Residues serine 232, serine 233, asparagine 234, and serine 277 each contribute to the dimethylallyl diphosphate site. Isopentenyl diphosphate is bound by residues serine 232, serine 233, asparagine 234, and serine 277.

Belongs to the IspH family. It depends on [4Fe-4S] cluster as a cofactor.

It catalyses the reaction isopentenyl diphosphate + 2 oxidized [2Fe-2S]-[ferredoxin] + H2O = (2E)-4-hydroxy-3-methylbut-2-enyl diphosphate + 2 reduced [2Fe-2S]-[ferredoxin] + 2 H(+). The catalysed reaction is dimethylallyl diphosphate + 2 oxidized [2Fe-2S]-[ferredoxin] + H2O = (2E)-4-hydroxy-3-methylbut-2-enyl diphosphate + 2 reduced [2Fe-2S]-[ferredoxin] + 2 H(+). It functions in the pathway isoprenoid biosynthesis; dimethylallyl diphosphate biosynthesis; dimethylallyl diphosphate from (2E)-4-hydroxy-3-methylbutenyl diphosphate: step 1/1. Its pathway is isoprenoid biosynthesis; isopentenyl diphosphate biosynthesis via DXP pathway; isopentenyl diphosphate from 1-deoxy-D-xylulose 5-phosphate: step 6/6. Functionally, catalyzes the conversion of 1-hydroxy-2-methyl-2-(E)-butenyl 4-diphosphate (HMBPP) into a mixture of isopentenyl diphosphate (IPP) and dimethylallyl diphosphate (DMAPP). Acts in the terminal step of the DOXP/MEP pathway for isoprenoid precursor biosynthesis. The protein is 4-hydroxy-3-methylbut-2-enyl diphosphate reductase of Bartonella quintana (strain Toulouse) (Rochalimaea quintana).